The chain runs to 474 residues: MQVTETLNEGLKREIQVMVPMKDLEAKLNERLDDTKGKIKLNGFRPGKVPSSYLRKMYGKSFMAEVLNEIINDAPRSILVDRNERSAVQPQIDINEDQKVLDGEADFIFNLKYEVLPEFEIKDFKDIEITREIADVSEQEIDEEVKKILSSTRSYSEGDAPSEEGDRVTIDYLGKIDDVPFDGGTGHDVQLVLGSNQFIPGFEEQLVGVKAGDTKAISVKFPDNYGVAHLAGKDAVFNITVKTVSKPDELKIDDEAAKKLGLESLDRLREVVQGQIENQYGLMTRQKIKRQILDSLDADYNFEIPERLVEIEFNNIWAQVNSDLQKSGRSFEDENTTEEKAREEYHMLAQRRVRLGLVLSEIGMKANIQVSESELQTAIFEQVRQYPGQEKEIMNFFRRTPEAIANLRAPIFEEKVIDYLLTHIKIKDKKVTVEELMKEFDESDAIEKSLVKKKTASDNKKSNEIKKKSTMKKV.

In terms of domain architecture, PPIase FKBP-type spans 165-250 (GDRVTIDYLG…VKTVSKPDEL (86 aa)). The segment covering 451–467 (VKKKTASDNKKSNEIKK) has biased composition (basic and acidic residues). Residues 451-474 (VKKKTASDNKKSNEIKKKSTMKKV) are disordered.

It belongs to the FKBP-type PPIase family. Tig subfamily.

Its subcellular location is the cytoplasm. The catalysed reaction is [protein]-peptidylproline (omega=180) = [protein]-peptidylproline (omega=0). Functionally, involved in protein export. Acts as a chaperone by maintaining the newly synthesized protein in an open conformation. Functions as a peptidyl-prolyl cis-trans isomerase. This Bartonella bacilliformis (strain ATCC 35685 / KC583 / Herrer 020/F12,63) protein is Trigger factor.